The sequence spans 355 residues: Hyaluronan and proteoglycan link protein 1 (355 aa).

Positions M1–L9 are excised as a propeptide. N-linked (GlcNAc...) asparagine glycans are attached at residues N21 and N56. One can recognise an Ig-like V-type domain in the interval P38–N156. Cystine bridges form between C61–C140, C182–C253, C206–C227, C280–C350, and C305–C326. Link domains lie at V160 to T255 and G260 to R352.

Belongs to the HAPLN family.

The protein localises to the secreted. The protein resides in the extracellular space. It localises to the extracellular matrix. Stabilizes the aggregates of proteoglycan monomers with hyaluronic acid in the extracellular cartilage matrix. This Gallus gallus (Chicken) protein is Hyaluronan and proteoglycan link protein 1 (HAPLN1).